We begin with the raw amino-acid sequence, 380 residues long: Putative 8-amino-7-oxononanoate synthase (380 aa).

Arg-18 contributes to the substrate binding site. 106-107 lines the pyridoxal 5'-phosphate pocket; the sequence is GY. His-131 contacts substrate. Pyridoxal 5'-phosphate contacts are provided by residues Ser-179, 205-208, and 236-239; these read DEAH and TFGK. Lys-239 carries the N6-(pyridoxal phosphate)lysine modification. Thr-352 lines the substrate pocket.

It belongs to the class-II pyridoxal-phosphate-dependent aminotransferase family. BioF subfamily. Homodimer. Pyridoxal 5'-phosphate serves as cofactor.

It catalyses the reaction 6-carboxyhexanoyl-[ACP] + L-alanine + H(+) = (8S)-8-amino-7-oxononanoate + holo-[ACP] + CO2. It participates in cofactor biosynthesis; biotin biosynthesis. In terms of biological role, catalyzes the decarboxylative condensation of pimeloyl-[acyl-carrier protein] and L-alanine to produce 8-amino-7-oxononanoate (AON), [acyl-carrier protein], and carbon dioxide. The sequence is that of Putative 8-amino-7-oxononanoate synthase (bioF) from Neisseria meningitidis serogroup C (strain 053442).